The primary structure comprises 231 residues: MFRKLAAECFGTFWLVFGGCGSAVLAAGFPELGIGFAGVALAFGLTVLTMAFAVGHISGGHFNPAVTIGLWAGGRFPAKEVVGYVIAQVVGGIVAAALLYLIASGKTGFDAAASGFASNGYGEHSPGGYSMLSALVVELVLSAGFLLVIHGATDKFAPAGFAPIAIGLALTLIHLISIPVTNTSVNPARSTAVAIFQGGWALEQLWFFWVVPIVGGIIGGLIYRTLLEKRD.

The next 2 membrane-spanning stretches (helical) occupy residues 9 to 29 (CFGTFWLVFGGCGSAVLAAGF) and 34 to 54 (IGFAGVALAFGLTVLTMAFAV). The short motif at 63 to 65 (NPA) is the NPA 1 element. Transmembrane regions (helical) follow at residues 82–102 (VGYVIAQVVGGIVAAALLYLI), 129–149 (YSMLSALVVELVLSAGFLLVI), and 156–176 (FAPAGFAPIAIGLALTLIHLI). Residues 186–188 (NPA) carry the NPA 2 motif. A helical membrane pass occupies residues 202 to 222 (LEQLWFFWVVPIVGGIIGGLI).

Belongs to the MIP/aquaporin (TC 1.A.8) family. In terms of assembly, homotetramer.

The protein localises to the cell inner membrane. The catalysed reaction is H2O(in) = H2O(out). In terms of biological role, channel that permits osmotically driven movement of water in both directions. It is involved in the osmoregulation and in the maintenance of cell turgor during volume expansion in rapidly growing cells. It mediates rapid entry or exit of water in response to abrupt changes in osmolarity. In Escherichia coli O6:H1 (strain CFT073 / ATCC 700928 / UPEC), this protein is Aquaporin Z.